The chain runs to 263 residues: MKVVILNDAAAVARYGADLFIRQIHKKPDSVLGLATGSTPVALYKELILAYREGRVTFKQVSSFNLDEYLGLDAAHPQSYRYFMNEQLFNHIDIDKAHTLVPPGDAADPIAACALYEKAIAQRGGIDVQLLGIGRNGHIGFNEPSSSLMSRTRVKTLTRATIDDNARFFAPDEYQPHLSITMGIGTILESKKVVLLATGENKADAIKATVEGPLTAACPASALQLHEQAVLIIDEAAASKLSDVEFYKHIERENQKLLDRLGY.

The active-site Proton acceptor; for enolization step is D67. The For ring-opening step role is filled by N136. H138 functions as the Proton acceptor; for ring-opening step in the catalytic mechanism. The active-site For ring-opening step is E143.

The protein belongs to the glucosamine/galactosamine-6-phosphate isomerase family. NagB subfamily. Homohexamer.

The enzyme catalyses alpha-D-glucosamine 6-phosphate + H2O = beta-D-fructose 6-phosphate + NH4(+). It participates in amino-sugar metabolism; N-acetylneuraminate degradation; D-fructose 6-phosphate from N-acetylneuraminate: step 5/5. Functionally, catalyzes the reversible isomerization-deamination of glucosamine 6-phosphate (GlcN6P) to form fructose 6-phosphate (Fru6P) and ammonium ion. The chain is Glucosamine-6-phosphate deaminase from Cellvibrio japonicus (strain Ueda107) (Pseudomonas fluorescens subsp. cellulosa).